The primary structure comprises 166 residues: UPF0561 protein C2orf68 homolog (166 aa).

A compositionally biased stretch (basic and acidic residues) spans 32–49 (NQLDRDDYDKKVKQAAKE). The disordered stretch occupies residues 32–107 (NQLDRDDYDK…SELEPPGRQL (76 aa)). Positions 91–101 (ESSSSGSSELE) are enriched in low complexity.

It belongs to the UPF0561 family.

In Mus musculus (Mouse), this protein is UPF0561 protein C2orf68 homolog.